We begin with the raw amino-acid sequence, 217 residues long: Flagellar L-ring protein 2 (217 aa).

Positions 1–15 are cleaved as a signal peptide; the sequence is MRILLALTWLAWLGA. The N-palmitoyl cysteine moiety is linked to residue Cys16. Cys16 is lipidated: S-diacylglycerol cysteine.

The protein belongs to the FlgH family. The basal body constitutes a major portion of the flagellar organelle and consists of four rings (L,P,S, and M) mounted on a central rod.

The protein localises to the cell outer membrane. Its subcellular location is the bacterial flagellum basal body. Its function is as follows. Assembles around the rod to form the L-ring and probably protects the motor/basal body from shearing forces during rotation. The chain is Flagellar L-ring protein 2 from Burkholderia thailandensis (strain ATCC 700388 / DSM 13276 / CCUG 48851 / CIP 106301 / E264).